The chain runs to 240 residues: 4-hydroxy-tetrahydrodipicolinate reductase (240 aa).

Residues 79–81 (ATT) and 103–106 (SANM) each bind NAD(+). Histidine 135 acts as the Proton donor/acceptor in catalysis. A (S)-2,3,4,5-tetrahydrodipicolinate-binding site is contributed by histidine 136. Lysine 139 acts as the Proton donor in catalysis. (S)-2,3,4,5-tetrahydrodipicolinate is bound at residue 145 to 146 (GT).

It belongs to the DapB family.

Its subcellular location is the cytoplasm. It catalyses the reaction (S)-2,3,4,5-tetrahydrodipicolinate + NAD(+) + H2O = (2S,4S)-4-hydroxy-2,3,4,5-tetrahydrodipicolinate + NADH + H(+). It carries out the reaction (S)-2,3,4,5-tetrahydrodipicolinate + NADP(+) + H2O = (2S,4S)-4-hydroxy-2,3,4,5-tetrahydrodipicolinate + NADPH + H(+). It participates in amino-acid biosynthesis; L-lysine biosynthesis via DAP pathway; (S)-tetrahydrodipicolinate from L-aspartate: step 4/4. Its function is as follows. Catalyzes the conversion of 4-hydroxy-tetrahydrodipicolinate (HTPA) to tetrahydrodipicolinate. This chain is 4-hydroxy-tetrahydrodipicolinate reductase, found in Staphylococcus saprophyticus subsp. saprophyticus (strain ATCC 15305 / DSM 20229 / NCIMB 8711 / NCTC 7292 / S-41).